The sequence spans 241 residues: Demethylmenaquinone methyltransferase (241 aa).

S-adenosyl-L-methionine contacts are provided by residues threonine 60, aspartate 81, and 106 to 107 (DA).

The protein belongs to the class I-like SAM-binding methyltransferase superfamily. MenG/UbiE family.

It catalyses the reaction a 2-demethylmenaquinol + S-adenosyl-L-methionine = a menaquinol + S-adenosyl-L-homocysteine + H(+). Its pathway is quinol/quinone metabolism; menaquinone biosynthesis; menaquinol from 1,4-dihydroxy-2-naphthoate: step 2/2. Functionally, methyltransferase required for the conversion of demethylmenaquinol (DMKH2) to menaquinol (MKH2). In Staphylococcus carnosus (strain TM300), this protein is Demethylmenaquinone methyltransferase.